We begin with the raw amino-acid sequence, 234 residues long: tRNA (guanine-N(1)-)-methyltransferase (234 aa).

Residues G115 and 135-140 contribute to the S-adenosyl-L-methionine site; that span reads VGDYIL.

It belongs to the RNA methyltransferase TrmD family. Homodimer.

The protein localises to the cytoplasm. It catalyses the reaction guanosine(37) in tRNA + S-adenosyl-L-methionine = N(1)-methylguanosine(37) in tRNA + S-adenosyl-L-homocysteine + H(+). Functionally, specifically methylates guanosine-37 in various tRNAs. The sequence is that of tRNA (guanine-N(1)-)-methyltransferase from Rickettsia africae (strain ESF-5).